Reading from the N-terminus, the 142-residue chain is Nucleoside diphosphate kinase (142 aa).

ATP-binding residues include Lys-11, Phe-59, Arg-87, Thr-93, Arg-104, and Asn-114. The active-site Pros-phosphohistidine intermediate is His-117.

Belongs to the NDK family. Homotetramer. The cofactor is Mg(2+).

It is found in the cytoplasm. It catalyses the reaction a 2'-deoxyribonucleoside 5'-diphosphate + ATP = a 2'-deoxyribonucleoside 5'-triphosphate + ADP. The catalysed reaction is a ribonucleoside 5'-diphosphate + ATP = a ribonucleoside 5'-triphosphate + ADP. Functionally, major role in the synthesis of nucleoside triphosphates other than ATP. The ATP gamma phosphate is transferred to the NDP beta phosphate via a ping-pong mechanism, using a phosphorylated active-site intermediate. The sequence is that of Nucleoside diphosphate kinase from Salinibacter ruber (strain DSM 13855 / M31).